Consider the following 344-residue polypeptide: Arginine N-succinyltransferase (344 aa).

Leu125 is a succinyl-CoA binding site. His229 acts as the Proton donor in catalysis.

Belongs to the arginine N-succinyltransferase family.

It carries out the reaction succinyl-CoA + L-arginine = N(2)-succinyl-L-arginine + CoA + H(+). It functions in the pathway amino-acid degradation; L-arginine degradation via AST pathway; L-glutamate and succinate from L-arginine: step 1/5. In terms of biological role, catalyzes the transfer of succinyl-CoA to arginine to produce N(2)-succinylarginine. The sequence is that of Arginine N-succinyltransferase from Salmonella dublin (strain CT_02021853).